The following is a 98-amino-acid chain: Growth-regulated protein homolog gamma (98 aa).

An N-terminal signal peptide occupies residues 1–29 (MAPAASSAPRLLRAAMLLLLLVAAGRRAA). 2 disulfides stabilise this stretch: cysteine 39–cysteine 65 and cysteine 41–cysteine 81.

Belongs to the intercrine alpha (chemokine CxC) family.

It is found in the secreted. The protein is Growth-regulated protein homolog gamma of Bos taurus (Bovine).